The chain runs to 144 residues: Peroxisomal membrane protein PEX34 (144 aa).

3 consecutive transmembrane segments (helical) span residues Asn-18–Phe-30, Val-52–Lys-73, and Thr-109–Lys-131.

Homooligomer. Interacts with PEX11, PEX25 and PEX27.

It localises to the peroxisome membrane. In concert with the three peroxisome divisional factors, PEX11, PEX25 and PEX27, controls peroxisome morphology and abundance under conditions of peroxisome proliferation. Maintains mature peroxisomes in actively dividing cells. The polypeptide is Peroxisomal membrane protein PEX34 (PEX34) (Saccharomyces cerevisiae (strain ATCC 204508 / S288c) (Baker's yeast)).